The following is a 157-amino-acid chain: Transmembrane protein 50A (157 aa).

S2 is subject to N-acetylserine. Phosphoserine is present on S2. Transmembrane regions (helical) follow at residues 26–46, 58–78, 95–115, and 126–146; these read IAAG…AVMY, TCGV…NGQV, IWLF…MWIL, and VVYP…GGLV.

This sequence belongs to the UPF0220 family.

The protein resides in the membrane. This is Transmembrane protein 50A (Tmem50a) from Mus musculus (Mouse).